The primary structure comprises 303 residues: MKLVLFLNMGGATNLQDCEVFLKNMFNDPYILGIKNRFLRKFVAWIITKARVKAMQENYKKMGGKSPLNELTQSLCDKLNLKQDEFKFDFVNLYVPPFATEILQKYTLNASDEIILFPLYPHHSCTTVTSSLEVLQNEISKQKIQAKVKTIDIFYKNELYNEMIVSHILAKKSKFDAKILIFSAHSLPQSIIDKGDLYEKHVNDHVEILKEKLKDHFDEFILAYQSKLGPVKWLEPNTSDVLANLNDKALIYPISFCIDCSETIFELGMEYKHLSKYNYDLISCPNDSDEFMEFILKYLSDLN.

Histidine 185 and glutamate 262 together coordinate Fe cation.

The protein belongs to the ferrochelatase family.

The protein resides in the cytoplasm. It catalyses the reaction heme b + 2 H(+) = protoporphyrin IX + Fe(2+). Its pathway is porphyrin-containing compound metabolism; protoheme biosynthesis; protoheme from protoporphyrin-IX: step 1/1. Catalyzes the ferrous insertion into protoporphyrin IX. The chain is Ferrochelatase from Campylobacter jejuni subsp. jejuni serotype O:2 (strain ATCC 700819 / NCTC 11168).